The following is a 428-amino-acid chain: Enolase (428 aa).

Position 162 (Gln-162) interacts with (2R)-2-phosphoglycerate. Glu-204 functions as the Proton donor in the catalytic mechanism. Residues Asp-241, Glu-282, and Asp-309 each coordinate Mg(2+). (2R)-2-phosphoglycerate-binding residues include Lys-334, Arg-363, Ser-364, and Lys-385. The Proton acceptor role is filled by Lys-334.

This sequence belongs to the enolase family. Requires Mg(2+) as cofactor.

It localises to the cytoplasm. The protein localises to the secreted. The protein resides in the cell surface. It carries out the reaction (2R)-2-phosphoglycerate = phosphoenolpyruvate + H2O. Its pathway is carbohydrate degradation; glycolysis; pyruvate from D-glyceraldehyde 3-phosphate: step 4/5. Its function is as follows. Catalyzes the reversible conversion of 2-phosphoglycerate (2-PG) into phosphoenolpyruvate (PEP). It is essential for the degradation of carbohydrates via glycolysis. This chain is Enolase, found in Mycobacterium marinum (strain ATCC BAA-535 / M).